We begin with the raw amino-acid sequence, 106 residues long: Large ribosomal subunit protein eL42 (106 aa).

Belongs to the eukaryotic ribosomal protein eL42 family.

Its subcellular location is the cytoplasm. The protein is Large ribosomal subunit protein eL42 (RPL44) of Trypanosoma brucei brucei.